A 140-amino-acid polypeptide reads, in one-letter code: Putative nickel-responsive regulator 3 (140 aa).

Ni(2+) contacts are provided by His-81, His-92, His-94, and Cys-100.

This sequence belongs to the transcriptional regulatory CopG/NikR family. Requires Ni(2+) as cofactor.

Functionally, transcriptional regulator. This is Putative nickel-responsive regulator 3 from Methanosarcina acetivorans (strain ATCC 35395 / DSM 2834 / JCM 12185 / C2A).